Here is a 389-residue protein sequence, read N- to C-terminus: Lipid-A-disaccharide synthase (389 aa).

Belongs to the LpxB family.

It catalyses the reaction a lipid X + a UDP-2-N,3-O-bis[(3R)-3-hydroxyacyl]-alpha-D-glucosamine = a lipid A disaccharide + UDP + H(+). Its pathway is bacterial outer membrane biogenesis; LPS lipid A biosynthesis. Functionally, condensation of UDP-2,3-diacylglucosamine and 2,3-diacylglucosamine-1-phosphate to form lipid A disaccharide, a precursor of lipid A, a phosphorylated glycolipid that anchors the lipopolysaccharide to the outer membrane of the cell. The polypeptide is Lipid-A-disaccharide synthase (Burkholderia cenocepacia (strain ATCC BAA-245 / DSM 16553 / LMG 16656 / NCTC 13227 / J2315 / CF5610) (Burkholderia cepacia (strain J2315))).